The primary structure comprises 128 residues: MMTAVSLTTRPQESVAFEDVAVYFTTKEWAIMVPAERALYRDVMLENYEAVAFVVPPTSKPALVSHLEQGKESCFTQPQGVLSRNDWRAGWIGYLELRRYTYLAKAVLRRIVSKIFRNRQCWEDRRKA.

A KRAB domain is found at 15–86 (VAFEDVAVYF…QPQGVLSRND (72 aa)).

The protein is KRAB domain-containing protein 1 (KRBOX1) of Homo sapiens (Human).